The sequence spans 335 residues: Methylthioribose-1-phosphate isomerase (335 aa).

Residues 47 to 49, R81, and Q184 each bind substrate; that span reads RGA. D225 acts as the Proton donor in catalysis. Residue 235-236 coordinates substrate; it reads NK.

The protein belongs to the eIF-2B alpha/beta/delta subunits family. MtnA subfamily.

The enzyme catalyses 5-(methylsulfanyl)-alpha-D-ribose 1-phosphate = 5-(methylsulfanyl)-D-ribulose 1-phosphate. It functions in the pathway amino-acid biosynthesis; L-methionine biosynthesis via salvage pathway; L-methionine from S-methyl-5-thio-alpha-D-ribose 1-phosphate: step 1/6. In terms of biological role, catalyzes the interconversion of methylthioribose-1-phosphate (MTR-1-P) into methylthioribulose-1-phosphate (MTRu-1-P). In Synechococcus sp. (strain CC9902), this protein is Methylthioribose-1-phosphate isomerase.